We begin with the raw amino-acid sequence, 220 residues long: Adenylate kinase (220 aa).

10–15 (GSGKST) lines the ATP pocket. The NMP stretch occupies residues 30-59 (SSGDLIRKEIAEGTPLGREMQAYLARGDLI). AMP is bound by residues serine 31, arginine 36, 57 to 59 (DLI), 83 to 86 (GYPR), and glutamine 90. The LID stretch occupies residues 124–161 (GRRICPKCGAVYHVEFNPPKIPGRCDVCGAELVQREDD). Arginine 125 is an ATP binding site. Residues cysteine 128 and cysteine 131 each coordinate Zn(2+). Position 134 to 135 (134 to 135 (VY)) interacts with ATP. The Zn(2+) site is built by cysteine 148 and cysteine 151. 2 residues coordinate AMP: arginine 158 and arginine 169. Position 197 (glycine 197) interacts with ATP.

Belongs to the adenylate kinase family. As to quaternary structure, monomer.

The protein resides in the cytoplasm. It catalyses the reaction AMP + ATP = 2 ADP. The protein operates within purine metabolism; AMP biosynthesis via salvage pathway; AMP from ADP: step 1/1. Catalyzes the reversible transfer of the terminal phosphate group between ATP and AMP. Plays an important role in cellular energy homeostasis and in adenine nucleotide metabolism. This is Adenylate kinase from Pyrococcus furiosus (strain ATCC 43587 / DSM 3638 / JCM 8422 / Vc1).